The following is a 297-amino-acid chain: Glutamyl-Q tRNA(Asp) synthetase (297 aa).

Residues arginine 7–serine 11 and glutamate 43 contribute to the L-glutamate site. The short motif at proline 10–serine 20 is the 'HIGH' region element. Zn(2+) is bound by residues cysteine 99, cysteine 101, tyrosine 122, and cysteine 126. Positions 182 and 200 each coordinate L-glutamate. Positions lysine 238–glutamine 242 match the 'KMSKS' region motif. Lysine 241 contributes to the ATP binding site.

It belongs to the class-I aminoacyl-tRNA synthetase family. GluQ subfamily. The cofactor is Zn(2+).

Catalyzes the tRNA-independent activation of glutamate in presence of ATP and the subsequent transfer of glutamate onto a tRNA(Asp). Glutamate is transferred on the 2-amino-5-(4,5-dihydroxy-2-cyclopenten-1-yl) moiety of the queuosine in the wobble position of the QUC anticodon. This Burkholderia pseudomallei (strain K96243) protein is Glutamyl-Q tRNA(Asp) synthetase.